A 428-amino-acid chain; its full sequence is Glutamate-1-semialdehyde 2,1-aminomutase 1 (428 aa).

Position 267 is an N6-(pyridoxal phosphate)lysine (lysine 267).

This sequence belongs to the class-III pyridoxal-phosphate-dependent aminotransferase family. HemL subfamily. Homodimer. Pyridoxal 5'-phosphate is required as a cofactor.

Its subcellular location is the cytoplasm. It catalyses the reaction (S)-4-amino-5-oxopentanoate = 5-aminolevulinate. The protein operates within porphyrin-containing compound metabolism; protoporphyrin-IX biosynthesis; 5-aminolevulinate from L-glutamyl-tRNA(Glu): step 2/2. In Staphylococcus aureus (strain MW2), this protein is Glutamate-1-semialdehyde 2,1-aminomutase 1.